Consider the following 175-residue polypeptide: Ribosome-binding factor A (175 aa).

The interval 129-175 is disordered; it reads GAKPAGEADPYRDRGSADEPSDAGGLVIRTSDGLEAENTGDDYQAED. Residues 162 to 175 show a composition bias toward acidic residues; it reads LEAENTGDDYQAED.

It belongs to the RbfA family. As to quaternary structure, monomer. Binds 30S ribosomal subunits, but not 50S ribosomal subunits or 70S ribosomes.

It is found in the cytoplasm. Functionally, one of several proteins that assist in the late maturation steps of the functional core of the 30S ribosomal subunit. Associates with free 30S ribosomal subunits (but not with 30S subunits that are part of 70S ribosomes or polysomes). Required for efficient processing of 16S rRNA. May interact with the 5'-terminal helix region of 16S rRNA. The sequence is that of Ribosome-binding factor A from Mycobacterium marinum (strain ATCC BAA-535 / M).